We begin with the raw amino-acid sequence, 352 residues long: Putative [LysW]-L-2-aminoadipate/[LysW]-L-glutamate phosphate reductase (352 aa).

Residues 10–13 and 34–36 each bind NADP(+); these read SGFT and SRK. The active site involves Cys151. Asn319 lines the NADP(+) pocket.

The protein belongs to the NAGSA dehydrogenase family. Type 1 subfamily. LysY sub-subfamily.

The protein resides in the cytoplasm. It carries out the reaction [amino-group carrier protein]-C-terminal-N-(1-carboxy-5-oxopentan-1-yl)-L-glutamine + phosphate + NADP(+) = [amino-group carrier protein]-C-terminal-N-(1-carboxy-5-phosphooxy-5-oxopentan-1-yl)-L-glutamine + NADPH + H(+). The catalysed reaction is [amino-group carrier protein]-C-terminal-gamma-(L-glutamyl-5-semialdehyde)-L-glutamate + phosphate + NADP(+) = [amino-group carrier protein]-C-terminal-gamma-(5-phospho-L-glutamyl)-L-glutamate + NADPH + H(+). It functions in the pathway amino-acid biosynthesis; L-lysine biosynthesis via AAA pathway; L-lysine from L-alpha-aminoadipate (Thermus route): step 3/5. Its pathway is amino-acid biosynthesis; L-arginine biosynthesis. In terms of biological role, involved in both the arginine and lysine biosynthetic pathways. The protein is Putative [LysW]-L-2-aminoadipate/[LysW]-L-glutamate phosphate reductase of Pyrobaculum neutrophilum (strain DSM 2338 / JCM 9278 / NBRC 100436 / V24Sta) (Thermoproteus neutrophilus).